A 558-amino-acid polypeptide reads, in one-letter code: Armadillo repeat-containing X-linked protein 5 (558 aa).

Basic and acidic residues-rich tracts occupy residues 1-14 and 139-156; these read MVDS…RGKA and KSHD…REET. Disordered regions lie at residues 1–35 and 139–165; these read MVDS…GKTQ and KSHD…SSDE. One copy of the ARM 1 repeat lies at 300 to 339; the sequence is CKSRGFSLEPKEFDKLVALLKLTKDPFIHEIATMIMGISP. The disordered stretch occupies residues 369-388; the sequence is HPGALSMVDDSSESSEEPKS. 3 ARM repeats span residues 422–461, 463–503, and 520–558; these read IKFE…CLSK, HANT…NINF, and SELI…ILKL.

The protein belongs to the eutherian X-chromosome-specific Armcx family.

This chain is Armadillo repeat-containing X-linked protein 5 (ARMCX5), found in Homo sapiens (Human).